We begin with the raw amino-acid sequence, 303 residues long: Coenzyme PQQ synthesis protein B (303 aa).

Belongs to the PqqB family.

It functions in the pathway cofactor biosynthesis; pyrroloquinoline quinone biosynthesis. May be involved in the transport of PQQ or its precursor to the periplasm. This Acinetobacter baumannii (strain SDF) protein is Coenzyme PQQ synthesis protein B.